The primary structure comprises 158 residues: NADH-quinone oxidoreductase subunit B (158 aa).

Positions 37, 38, 102, and 132 each coordinate [4Fe-4S] cluster.

The protein belongs to the complex I 20 kDa subunit family. In terms of assembly, NDH-1 is composed of 14 different subunits. Subunits NuoB, C, D, E, F, and G constitute the peripheral sector of the complex. [4Fe-4S] cluster is required as a cofactor.

The protein resides in the cell inner membrane. It catalyses the reaction a quinone + NADH + 5 H(+)(in) = a quinol + NAD(+) + 4 H(+)(out). In terms of biological role, NDH-1 shuttles electrons from NADH, via FMN and iron-sulfur (Fe-S) centers, to quinones in the respiratory chain. Couples the redox reaction to proton translocation (for every two electrons transferred, four hydrogen ions are translocated across the cytoplasmic membrane), and thus conserves the redox energy in a proton gradient. The protein is NADH-quinone oxidoreductase subunit B of Leptothrix cholodnii (strain ATCC 51168 / LMG 8142 / SP-6) (Leptothrix discophora (strain SP-6)).